Reading from the N-terminus, the 289-residue chain is BTB/POZ domain-containing protein KCTD7 (289 aa).

The tract at residues 1–40 (MVVVTGREPDSRRPDGAMSSSDAEDDFLEPATPTATQAGH) is disordered. Residues 53-141 (VPLNIGGAHF…YAIGPLLEQL (89 aa)) form the BTB domain.

As to quaternary structure, interacts with CUL3.

The protein resides in the cell membrane. Its subcellular location is the cytoplasm. It localises to the cytosol. Its function is as follows. May be involved in the control of excitability of cortical neurons. This Bos taurus (Bovine) protein is BTB/POZ domain-containing protein KCTD7 (KCTD7).